Reading from the N-terminus, the 223-residue chain is MAYEISVDEIAEGWLKLVEKIMSDGREIRDERGSLTREVMNTVVTIKNPLGRSGDFYHLPARSLINIRVPEGYFWSGEKLEKYSEQFLSDDRKGFVYTYGNRLRAHFGVDQVDRAIERLKNCKESRRATMVTWDPKIDTESDEVPCMILVDFKVREGRLFTTALWRSHDIYGAWFPNAVGLAYLADHVASEVGVEVGHITIHSISAHIYEVNFKEAKEVIKNG.

C146 is a catalytic residue.

The protein belongs to the thymidylate synthase family. Archaeal-type ThyA subfamily. In terms of assembly, monomer.

It is found in the cytoplasm. It participates in pyrimidine metabolism; dTTP biosynthesis. Functionally, may catalyze the biosynthesis of dTMP using an unknown cosubstrate. In vitro, also catalyzes the dehalogenation of 5-bromo-deoxyuridine monophosphate (Br-dUMP) and the tritium exchange of [5-3H]deoxyuridine monophosphate ([5-3H]dUMP). In Methanothermobacter marburgensis (strain ATCC BAA-927 / DSM 2133 / JCM 14651 / NBRC 100331 / OCM 82 / Marburg) (Methanobacterium thermoautotrophicum), this protein is Putative thymidylate synthase (thyA).